The primary structure comprises 498 residues: Ribulose bisphosphate carboxylase large chain (498 aa).

The propeptide occupies 1 to 2; that stretch reads MS. The residue at position 3 (P3) is an N-acetylproline. At K14 the chain carries N6,N6,N6-trimethyllysine. Substrate contacts are provided by N123 and T173. K175 serves as the catalytic Proton acceptor. Position 177 (K177) interacts with substrate. Mg(2+)-binding residues include K201, D203, and E204. Position 201 is an N6-carboxylysine (K201). Catalysis depends on H294, which acts as the Proton acceptor. Substrate-binding residues include R295, H327, and S379. Residues 473–498 form a disordered region; the sequence is DTLDPNDKKQRDNEDTLADKFFGDKG.

Belongs to the RuBisCO large chain family. Type I subfamily. Heterohexadecamer of 8 large chains and 8 small chains; disulfide-linked. The disulfide link is formed within the large subunit homodimers. The cofactor is Mg(2+). Post-translationally, the disulfide bond which can form in the large chain dimeric partners within the hexadecamer appears to be associated with oxidative stress and protein turnover.

It localises to the plastid. The enzyme catalyses 2 (2R)-3-phosphoglycerate + 2 H(+) = D-ribulose 1,5-bisphosphate + CO2 + H2O. It catalyses the reaction D-ribulose 1,5-bisphosphate + O2 = 2-phosphoglycolate + (2R)-3-phosphoglycerate + 2 H(+). Its function is as follows. RuBisCO catalyzes two reactions: the carboxylation of D-ribulose 1,5-bisphosphate, the primary event in carbon dioxide fixation, as well as the oxidative fragmentation of the pentose substrate in the photorespiration process. Both reactions occur simultaneously and in competition at the same active site. This is Ribulose bisphosphate carboxylase large chain from Cuscuta exaltata (Tall dodder).